Reading from the N-terminus, the 318-residue chain is Guanidinopropionase (318 aa).

Positions 126, 148, 150, 152, 240, and 242 each coordinate Mn(2+).

The protein belongs to the arginase family. Agmatinase subfamily. In terms of assembly, homohexamer. Mn(2+) serves as cofactor.

The enzyme catalyses 3-guanidinopropanoate + H2O = urea + beta-alanine. Functionally, catalyzes the hydrolysis of 3-guanidinopropanoate to beta-alanine and urea. Possesses low activity against 4-guanidinobutanoate. Has no activity against arginine and agmatine. This Pseudomonas aeruginosa (strain ATCC 15692 / DSM 22644 / CIP 104116 / JCM 14847 / LMG 12228 / 1C / PRS 101 / PAO1) protein is Guanidinopropionase (gpuA).